Reading from the N-terminus, the 260-residue chain is BTB/POZ domain-containing protein KCTD21 (260 aa).

The BTB domain occupies aspartate 3 to glutamate 72. A coiled-coil region spans residues glutamine 88–leucine 112.

In terms of assembly, homopentamer. Interacts with KCTD11; KCTD21 and KCTD11 may associate in pentameric assemblies. Interacts (via BTB domain) with CUL3; indicative for a participation in a BCR (BTB-CUL3-RBX1) E3 ubiquitin-protein ligase complex. In terms of tissue distribution, highly expressed in cerebellum and brain. Expression is down-regulated in medulloblastoma.

It functions in the pathway protein modification; protein ubiquitination. Functionally, probable substrate-specific adapter of a BCR (BTB-CUL3-RBX1) E3 ubiquitin-protein ligase complex mediating the ubiquitination and subsequent proteasomal degradation of target proteins. Promotes the ubiquitination of HDAC1. Can function as antagonist of the Hedgehog pathway by affecting the nuclear transfer of transcription factor GLI1; the function probably occurs via HDAC1 down-regulation, keeping GLI1 acetylated and inactive. Inhibits cell growth and tumorigenicity of medulloblastoma (MDB). The polypeptide is BTB/POZ domain-containing protein KCTD21 (KCTD21) (Homo sapiens (Human)).